The chain runs to 338 residues: MLAVRSLQHLSTVVLITAYGLVLVWYTVFGASPLHRCIYAVRPTGTNNDTALVWMKMNQTLLFLGAPTHPPNGGWRNHAHISYANLIAGRVVPFQVPPDATNRRIMNVHEAVNCLETLWYTRVRLVVVGWFLYLAFVALHQRRCMFGVVSPAHKMVAPATYLLNYAGRIVSSVFLQYPYTKITRLLCELSVQRQNLVQLFETDPVTFLYHRPAIGVIVGCELIVRFVAVGLIVGTAFISRGACAITYPLFLTITTWCFVSTIGLTELYCILRRGPAPKNADKAAAPGRSKGLSGVCGRCCSIILSGIAMRLCYIAVVAGVVLVALHYEQEIQRRLFDV.

An N-terminal signal peptide occupies residues 1–30 (MLAVRSLQHLSTVVLITAYGLVLVWYTVFG). Topologically, residues 31–121 (ASPLHRCIYA…VNCLETLWYT (91 aa)) are extracellular. The segment at 31–121 (ASPLHRCIYA…VNCLETLWYT (91 aa)) is involved in fusion. Residues Asn48 and Asn58 are each glycosylated (N-linked (GlcNAc...) asparagine; by host). The helical transmembrane segment at 122–140 (RVRLVVVGWFLYLAFVALH) threads the bilayer. At 141-212 (QRRCMFGVVS…DPVTFLYHRP (72 aa)) the chain is on the cytoplasmic side. Residues 213 to 233 (AIGVIVGCELIVRFVAVGLIV) traverse the membrane as a helical segment. The Extracellular segment spans residues 234–243 (GTAFISRGAC). The helical transmembrane segment at 244 to 264 (AITYPLFLTITTWCFVSTIGL) threads the bilayer. Residues 265–301 (TELYCILRRGPAPKNADKAAAPGRSKGLSGVCGRCCS) are Cytoplasmic-facing. The interval 265 to 301 (TELYCILRRGPAPKNADKAAAPGRSKGLSGVCGRCCS) is interaction with UL20. A helical transmembrane segment spans residues 302 to 322 (IILSGIAMRLCYIAVVAGVVL). Residues 323-338 (VALHYEQEIQRRLFDV) are Extracellular-facing.

The protein belongs to the alphaherpesvirinae glycoprotein K family. In terms of assembly, interacts (via UL20 interaction region) with protein UL20 (via N-terminus); this interaction probably plays a role in the coordinate transport of protein UL20 and gK to the trans-Golgi network (TGN), and is required for the cell surface expression of gK. N-glycosylated.

The protein resides in the host cell membrane. It localises to the host endosome membrane. Its subcellular location is the host Golgi apparatus membrane. Glycoprotein that probably modulates membrane fusion events during secondary envelopment of cytoplasmic capsids that bud into specific trans-Golgi network (TGN)-derived membranes. Also plays a role, together with gB, in virus-induced cell-to-cell fusion (syncytia formation). Seems to block fusion of virions with infected-cell membranes. The chain is Envelope glycoprotein K (gK) from Homo sapiens (Human).